The chain runs to 318 residues: Deoxyhypusine hydroxylase (318 aa).

HEAT-like PBS-type repeat units follow at residues 70–96 (LKHEVAYVLGQTKDLYAAPYLREVLEN) and 103–129 (VRHEAAEALGALGDKESLPLLEKYFKE). Fe cation is bound by residues His72, Glu73, His105, Glu106, His231, Glu232, His264, and Glu265. An HEAT-like PBS-type 3 repeat occupies 262–288 (VRHEAAEALGSIATDECLPVLQSFLND).

The protein belongs to the deoxyhypusine hydroxylase family. The cofactor is Fe(2+).

It is found in the cytoplasm. The protein resides in the nucleus. The catalysed reaction is [eIF5A protein]-deoxyhypusine + AH2 + O2 = [eIF5A protein]-hypusine + A + H2O. It functions in the pathway protein modification; eIF5A hypusination. Functionally, catalyzes the hydroxylation of the N(6)-(4-aminobutyl)-L-lysine intermediate to form hypusine, an essential post-translational modification only found in mature eIF-5A factor. The polypeptide is Deoxyhypusine hydroxylase (Candida albicans (strain SC5314 / ATCC MYA-2876) (Yeast)).